The primary structure comprises 537 residues: NEDD4-binding protein 3 (537 aa).

Ser-172 is modified (phosphoserine). Disordered regions lie at residues 173-234 (LDEG…VLSC), 328-361 (KELR…EARW), and 423-458 (QEQA…REGA). The span at 178–207 (PEPSLSDSSSGGSFGRSPGTGPSPFSSSLG) shows a compositional bias: low complexity. Residues 295-501 (VERLHEVAQK…RVLRYQREIQ (207 aa)) adopt a coiled-coil conformation. Over residues 351–361 (PNARPEEEARW) the composition is skewed to basic and acidic residues.

Belongs to the N4BP3 family. In terms of assembly, binds NEDD4. Interacts with 14-3-3 proteins. Interacts with MAVS.

It localises to the cytoplasmic vesicle. It is found in the cell projection. The protein resides in the axon. The protein localises to the dendrite. Plays a positive role in the antiviral innate immune signaling pathway. Mechanistically, interacts with MAVS and functions as a positive regulator to promote 'Lys-63'-linked polyubiquitination of MAVS and thus strengthens the interaction between MAVS and TRAF2. Also plays a role in axon and dendrite arborization during cranial nerve development. May also be important for neural crest migration and early development of other anterior structures including eye, brain and cranial cartilage. The sequence is that of NEDD4-binding protein 3 (N4bp3) from Mus musculus (Mouse).